Here is a 134-residue protein sequence, read N- to C-terminus: Putative STAG3-like protein 2 (134 aa).

The SCD domain occupies 10–95 (PKVTCRDVLP…GRFKDWMVSM (86 aa)).

It belongs to the SCC3 family.

The protein resides in the nucleus. The polypeptide is Putative STAG3-like protein 2 (STAG3L2) (Homo sapiens (Human)).